The following is a 193-amino-acid chain: Putative 3-methyladenine DNA glycosylase (193 aa).

Belongs to the DNA glycosylase MPG family.

The chain is Putative 3-methyladenine DNA glycosylase from Agrobacterium fabrum (strain C58 / ATCC 33970) (Agrobacterium tumefaciens (strain C58)).